We begin with the raw amino-acid sequence, 246 residues long: Eukaryotic translation initiation factor 3 subunit K (246 aa).

The span at 1 to 21 (MENDQDQQQQQQQSQQQQPQQ) shows a compositional bias: low complexity. The interval 1 to 30 (MENDQDQQQQQQQSQQQQPQQEEQEQVDVD) is disordered. One can recognise a PCI domain in the interval 72-235 (YLFQANSTLL…QKKADTFTFD (164 aa)).

This sequence belongs to the eIF-3 subunit K family. As to quaternary structure, component of the eukaryotic translation initiation factor 3 (eIF-3) complex.

The protein resides in the cytoplasm. Component of the eukaryotic translation initiation factor 3 (eIF-3) complex, which is involved in protein synthesis of a specialized repertoire of mRNAs and, together with other initiation factors, stimulates binding of mRNA and methionyl-tRNAi to the 40S ribosome. The eIF-3 complex specifically targets and initiates translation of a subset of mRNAs involved in cell proliferation. The polypeptide is Eukaryotic translation initiation factor 3 subunit K (eif3K) (Dictyostelium discoideum (Social amoeba)).